Reading from the N-terminus, the 1568-residue chain is Myosin-2 (1568 aa).

The 54-residue stretch at 4–57 (EVGTRCWYPHKELGWIGAEVIKNEVKDGKYHLELSLEDDEVVSVDTEDLNDDKN) folds into the Myosin N-terminal SH3-like domain. The Myosin motor domain maps to 70-783 (EATEDLTSLS…MLAYLEKLRS (714 aa)). An ATP-binding site is contributed by 164–171 (GESGAGKT). The tract at residues 443–523 (FIGVLDIYGF…LGILSLLDEE (81 aa)) is actin-binding. The disordered stretch occupies residues 619-641 (KKAELEQNNPGNKKPGPARTVNR). 6 IQ domains span residues 786–808 (MHNS…QYLK), 809–833 (ISQA…YHEM), 834–856 (KVHS…NVFN), 857–881 (VLIT…KREH), 882–904 (EYNA…TFLN), and 905–934 (TKRD…DAKS). The stretch at 944–1088 (KLENKVIELT…ISRLQTAMSL (145 aa)) forms a coiled coil. The segment at 1089-1568 (GTVTTSVLPQ…VAQQVVQDGH (480 aa)) is non alpha-helical, tail domain. The region spanning 1223–1498 (AQVLTTIQKV…LRYVADIVKK (276 aa)) is the Dilute domain.

The protein belongs to the TRAFAC class myosin-kinesin ATPase superfamily. Myosin family. Homodimer. Interacts with calmodulin (CMD1) and the myosin light chain MLC1 through its IQ repeats.

In terms of biological role, myosin heavy chain that is required for the cell cycle-regulated transport of various organelles and proteins for their segregation. Functions by binding with its tail domain to receptor proteins on organelles and exerting force with its N-terminal motor domain against actin filaments, thereby transporting its cargo along polarized actin cables. This chain is Myosin-2 (MYO2), found in Saccharomyces uvarum (strain ATCC 76518 / CBS 7001 / CLIB 283 / NBRC 10550 / MCYC 623 / NCYC 2669 / NRRL Y-11845) (Yeast).